A 77-amino-acid polypeptide reads, in one-letter code: U8-lycotoxin-Ls1m (77 aa).

A signal peptide spans 1-20; sequence MKLMIFTGLVLFAIVSLIEA. Positions 21-26 are excised as a propeptide; it reads QAENEK.

This sequence belongs to the neurotoxin 19 (CSTX) family. 08 (U8-Lctx) subfamily. Contains 4 disulfide bonds. As to expression, expressed by the venom gland.

Its subcellular location is the secreted. This chain is U8-lycotoxin-Ls1m, found in Lycosa singoriensis (Wolf spider).